A 232-amino-acid chain; its full sequence is MKFQARVLTLYPEMFPGFLGYSLAGQALERGIWSLETVQIRDFALDKHHSVDDTPAGGGAGMVMRADVLAAALDSCPHDSTRLLMSPRGRPFNQAYARFLACESGVTLVCGRFEGVDERIIEARKLEEVSIGDYILSGGETAALVLLDAIVRLLPGVMGNEASGKCESFENGLLEHPQYTRPSIFEGRCIPPVLTSGHHKAIADWRQQQAELLTRQRRPELYALYDKNRQKT.

S-adenosyl-L-methionine is bound by residues glycine 111 and 131 to 136 (IGDYIL).

This sequence belongs to the RNA methyltransferase TrmD family. Homodimer.

It localises to the cytoplasm. The enzyme catalyses guanosine(37) in tRNA + S-adenosyl-L-methionine = N(1)-methylguanosine(37) in tRNA + S-adenosyl-L-homocysteine + H(+). Specifically methylates guanosine-37 in various tRNAs. The chain is tRNA (guanine-N(1)-)-methyltransferase from Bartonella quintana (strain Toulouse) (Rochalimaea quintana).